Here is a 195-residue protein sequence, read N- to C-terminus: Imidazoleglycerol-phosphate dehydratase (195 aa).

Belongs to the imidazoleglycerol-phosphate dehydratase family.

The protein resides in the cytoplasm. The enzyme catalyses D-erythro-1-(imidazol-4-yl)glycerol 3-phosphate = 3-(imidazol-4-yl)-2-oxopropyl phosphate + H2O. The protein operates within amino-acid biosynthesis; L-histidine biosynthesis; L-histidine from 5-phospho-alpha-D-ribose 1-diphosphate: step 6/9. The sequence is that of Imidazoleglycerol-phosphate dehydratase from Dechloromonas aromatica (strain RCB).